A 222-amino-acid chain; its full sequence is Uridine diphosphate glucose pyrophosphatase NUDT14 (222 aa).

Residues 38–206 (KTHDSVTILM…DIPKTLGVIY (169 aa)) form the Nudix hydrolase domain. Positions 111-129 (PGLSLEEAACKEAWEECGY) match the Nudix box motif.

This sequence belongs to the Nudix hydrolase family. In terms of assembly, homodimer. Requires Mg(2+) as cofactor.

It is found in the cytoplasm. The catalysed reaction is UDP-sugar + H2O = UMP + alpha-D-aldose 1-phosphate.. Functionally, hydrolyzes UDP-glucose to glucose 1-phosphate and UMP and ADP-ribose to ribose 5-phosphate and AMP. The physiological substrate is probably UDP-glucose. Poor activity on other substrates such as ADP-glucose, CDP-glucose, GDP-glucose and GDP-mannose. The chain is Uridine diphosphate glucose pyrophosphatase NUDT14 (Nudt14) from Mus musculus (Mouse).